The primary structure comprises 207 residues: Pyrrolidone-carboxylate peptidase (207 aa).

Catalysis depends on residues Glu-80, Cys-143, and His-167.

Belongs to the peptidase C15 family. As to quaternary structure, homotetramer.

It is found in the cytoplasm. It catalyses the reaction Release of an N-terminal pyroglutamyl group from a polypeptide, the second amino acid generally not being Pro.. Its function is as follows. Removes 5-oxoproline from various penultimate amino acid residues except L-proline. This Coprothermobacter proteolyticus (strain ATCC 35245 / DSM 5265 / OCM 4 / BT) protein is Pyrrolidone-carboxylate peptidase.